A 340-amino-acid chain; its full sequence is Extracellular matrix protein-binding protein emp (340 aa).

The signal sequence occupies residues 1-26 (MKKKLLVLTMSTLFATQLINSNHAKA).

It is found in the cell surface. Functionally, adhesin that binds to the host cell extracellular matrix proteins fibronectin, fibrinogen, collagen, and vitronectin. The sequence is that of Extracellular matrix protein-binding protein emp (emp) from Staphylococcus aureus (strain Mu50 / ATCC 700699).